We begin with the raw amino-acid sequence, 231 residues long: NADH-ubiquinone oxidoreductase chain 4 (231 aa).

Transmembrane regions (helical) follow at residues 1-21 (PIAG…YGII), 34-54 (MFLP…LTCL), 62-84 (LIAY…QTPW), 89-111 (AMAL…NTTY), 128-148 (ILPM…AIPP), and 169-189 (TIIM…HMFL).

This sequence belongs to the complex I subunit 4 family.

It is found in the mitochondrion membrane. The catalysed reaction is a ubiquinone + NADH + 5 H(+)(in) = a ubiquinol + NAD(+) + 4 H(+)(out). In terms of biological role, core subunit of the mitochondrial membrane respiratory chain NADH dehydrogenase (Complex I) that is believed to belong to the minimal assembly required for catalysis. Complex I functions in the transfer of electrons from NADH to the respiratory chain. The immediate electron acceptor for the enzyme is believed to be ubiquinone. The protein is NADH-ubiquinone oxidoreductase chain 4 (MT-ND4) of Bothrops erythromelas (Caatinga lance head).